The sequence spans 183 residues: Adenine phosphoribosyltransferase (183 aa).

This sequence belongs to the purine/pyrimidine phosphoribosyltransferase family. As to quaternary structure, homodimer.

The protein localises to the cytoplasm. It catalyses the reaction AMP + diphosphate = 5-phospho-alpha-D-ribose 1-diphosphate + adenine. It participates in purine metabolism; AMP biosynthesis via salvage pathway; AMP from adenine: step 1/1. Catalyzes a salvage reaction resulting in the formation of AMP, that is energically less costly than de novo synthesis. The sequence is that of Adenine phosphoribosyltransferase from Escherichia fergusonii (strain ATCC 35469 / DSM 13698 / CCUG 18766 / IAM 14443 / JCM 21226 / LMG 7866 / NBRC 102419 / NCTC 12128 / CDC 0568-73).